The following is a 652-amino-acid chain: Probable potassium transport system protein Kup (652 aa).

A compositionally biased stretch (low complexity) spans 1–20 (MSNDTSPGTSSVDSKSSDPS). Residues 1–26 (MSNDTSPGTSSVDSKSSDPSYGVPGH) form a disordered region. 12 helical membrane-spanning segments follow: residues 36-56 (LSLG…LYAL), 76-96 (LVSL…VMFI), 125-145 (WLIV…MITP), 161-181 (PSFD…LFCI), 193-213 (FGPI…FNII), 228-248 (AIHF…SVVL), 270-290 (LGWY…QCAL), 314-334 (LIIL…TGAF), 362-382 (IYIP…IAMF), 391-411 (AYGI…GVLV), 419-439 (AWQS…FFLS), and 444-464 (IPEG…MLMT).

This sequence belongs to the HAK/KUP transporter (TC 2.A.72) family.

It localises to the cell inner membrane. The enzyme catalyses K(+)(in) + H(+)(in) = K(+)(out) + H(+)(out). Functionally, transport of potassium into the cell. Likely operates as a K(+):H(+) symporter. The chain is Probable potassium transport system protein Kup from Zymomonas mobilis subsp. mobilis (strain ATCC 31821 / ZM4 / CP4).